Reading from the N-terminus, the 172-residue chain is Large ribosomal subunit protein uL10 (172 aa).

It belongs to the universal ribosomal protein uL10 family. In terms of assembly, part of the ribosomal stalk of the 50S ribosomal subunit. The N-terminus interacts with L11 and the large rRNA to form the base of the stalk. The C-terminus forms an elongated spine to which L12 dimers bind in a sequential fashion forming a multimeric L10(L12)X complex.

Its function is as follows. Forms part of the ribosomal stalk, playing a central role in the interaction of the ribosome with GTP-bound translation factors. In Ruegeria sp. (strain TM1040) (Silicibacter sp.), this protein is Large ribosomal subunit protein uL10.